A 314-amino-acid polypeptide reads, in one-letter code: MAATNLENQLHSAQKNLLFLQREHASTLKGLHAEIRRLQQHCTDLTYELTLKSFELTGDSSSRTTELKRRCEELEAQLKAKEEENRKLLQELEQKNAAIAVLENTVREREKKYLEELKVKSHKLSMLSGELEQRASTVAYLTSQLHAAKKKLLSSSGTSDASPAGSPALASYKPTPPKDKLPETPRRRMKKSLSAPLHPEFEEVYRFGAESRKLLLREPVDAMPDPTPFLLARESAEVQLKERPLVIPPIASDRSATGQHSPARDKPHKTHVGVAHRIHHATPSQAQPEGEMRAVDQVNASKVVRKHSGTDRTV.

Coiled coils occupy residues 1-27 (MAATNLENQLHSAQKNLLFLQREHAST) and 59-113 (DSSS…EKKY). Disordered stretches follow at residues 153–193 (LSSS…KKSL) and 251–314 (ASDR…DRTV). A compositionally biased stretch (basic and acidic residues) spans 176–186 (PPKDKLPETPR). Phosphoserine is present on serine 192. Positions 266-280 (KPHKTHVGVAHRIHH) are enriched in basic residues.

Interacts with CEP164. Post-translationally, phosphorylated at Ser-192 by TTBK2.

The protein localises to the cytoplasm. The protein resides in the cytoskeleton. It localises to the microtubule organizing center. Its subcellular location is the centrosome. It is found in the centriole. In terms of biological role, interferon-stimulated protein that plays a role in innate immunity. The polypeptide is Coiled-coil domain-containing protein 92 (Ccdc92) (Mus musculus (Mouse)).